The sequence spans 134 residues: Histone H2A.Z (134 aa).

The segment at 1 to 31 (MSGKAHGGKGKSGAKDSGSLRSQSSSARAGL) is disordered. S2 carries the N-acetylserine modification. Residues K4, K9, K11, and K15 each carry the N6-acetyllysine modification. The segment covering 15 to 31 (KDSGSLRSQSSSARAGL) has biased composition (low complexity). The interval 98-108 (GDDELDSLIRA) is interaction with VPS72.

Belongs to the histone H2A family. In terms of assembly, the nucleosome is a histone octamer containing two molecules each of H2A, H2B, H3 and H4 assembled in one H3-H4 heterotetramer and two H2A-H2B heterodimers. The octamer wraps approximately 147 bp of DNA. H2A or its variant H2A.Z forms a heterodimer with H2B. H2A.Z associates with the VPS72/SWC2 subunit of the SWR1 chromatin remodeling complex. Also interacts with RBP1/DNA-directed RNA polymerase II largest subunit. Interacts with NAP1. Interacts with MPS3. In terms of processing, acetylated by ESA1, a component of the NuA4 histone acetyltransferase (HAT) complex, and/or by GCN5, a component of the SAGA complex, to form H2A.ZK3Ac, H2A.ZK8Ac, H2A.ZK10Ac and H2A.ZK14Ac once deposited into chromatin. Acetylation is required for function at telomeres. H2A.ZK14Ac is acetylated at the promoters of active genes.

The protein resides in the nucleus. The protein localises to the chromosome. Variant histone H2A which can replace H2A in some nucleosomes. Nucleosomes wrap and compact DNA into chromatin, limiting DNA accessibility to the cellular machineries which require DNA as a template. Histones thereby play a central role in transcription regulation, DNA repair, DNA replication and chromosomal stability. DNA accessibility is regulated via a complex set of post-translational modifications of histones, also called histone code, and nucleosome remodeling. This variant is enriched at promoters, it may keep them in a repressed state until the appropriate activation signal is received. Near telomeres, it may counteract gene silencing caused by the spread of heterochromatin proteins. Required for the RNA polymerase II and SPT15/TBP recruitment to the target genes. Involved in chromosome stability. Required to target MPS3 to the inner membrane of the nuclear envelope. The protein is Histone H2A.Z of Saccharomyces cerevisiae (strain ATCC 204508 / S288c) (Baker's yeast).